The following is a 174-amino-acid chain: Pectinesterase inhibitor 12 (174 aa).

The signal sequence occupies residues 1–20 (MKFLVSLVIFSLFLNGFATA). Cystine bridges form between cysteine 28/cysteine 43 and cysteine 100/cysteine 140. N-linked (GlcNAc...) asparagine glycosylation occurs at asparagine 129.

The protein belongs to the PMEI family.

The protein localises to the secreted. Its subcellular location is the extracellular space. The protein resides in the apoplast. In terms of biological role, pectin methylesterase (PME) inhibitor involved in the maintenance of cell wall integrity in response to necrotrophic pathogens. Modulates PME activity and pectin methylesterification during infection by Botrytis cinerea and contributes to resistance against the pathogen. The sequence is that of Pectinesterase inhibitor 12 from Arabidopsis thaliana (Mouse-ear cress).